We begin with the raw amino-acid sequence, 499 residues long: Membrane-associated tyrosine- and threonine-specific cdc2-inhibitory kinase (499 aa).

Met1 bears the N-acetylmethionine mark. The disordered stretch occupies residues Met1–Pro29. A compositionally biased stretch (pro residues) spans Gly16–Val28. Thr17 bears the Phosphothreonine mark. Position 40 is a phosphoserine (Ser40). Residues Lys42–Pro72 are disordered. A phosphoserine mark is found at Ser94 and Ser120. The Protein kinase domain maps to Phe110–Leu359. ATP contacts are provided by residues Leu116–Val124 and Lys139. A phosphoserine mark is found at Ser143 and Ser160. Residue Asp233 is the Proton acceptor of the active site. Positions 238, 251, and 253 each coordinate Mg(2+). The Membrane-association motif motif lies at Leu382–Ala398. Positions Ala398–Thr499 are interaction with PIN1. Ser426 is modified (phosphoserine; by PLK1). Residues Gly437–Thr499 are interaction with CDC2-CCNB1. The disordered stretch occupies residues Gly451–Pro485. A phosphoserine mark is found at Ser469, Ser473, and Ser482. Thr495 carries the phosphothreonine; by PLK1 modification.

The protein belongs to the protein kinase superfamily. Ser/Thr protein kinase family. WEE1 subfamily. As to quaternary structure, interacts with CDC2-CCNB1 complex. Can also interact with PIN1 when phosphorylated by CDC2-CCNB1. In terms of processing, autophosphorylated. Phosphorylated by CDC2-CCNB1 complexes on undefined serine and threonine residues. The phosphorylation by CDC2-CCNB1 complexes may inhibit the catalytic activity.

The protein resides in the endoplasmic reticulum membrane. Its subcellular location is the golgi apparatus membrane. It carries out the reaction L-seryl-[protein] + ATP = O-phospho-L-seryl-[protein] + ADP + H(+). It catalyses the reaction L-threonyl-[protein] + ATP = O-phospho-L-threonyl-[protein] + ADP + H(+). Its activity is regulated as follows. Negatively regulated by hyperphosphorylation during mitosis. The hyperphosphorylated form does not associate with CCNB1-CDC2 complexes. The PLK1 protein kinase may be required for mitotic phosphorylation. Functionally, acts as a negative regulator of entry into mitosis (G2 to M transition) by phosphorylation of the CDK1 kinase specifically when CDK1 is complexed to cyclins. Mediates phosphorylation of CDK1 predominantly on 'Thr-14'. Also involved in Golgi fragmentation. May be involved in phosphorylation of CDK1 on 'Tyr-15' to a lesser degree, however tyrosine kinase activity is unclear and may be indirect. This is Membrane-associated tyrosine- and threonine-specific cdc2-inhibitory kinase (PKMYT1) from Homo sapiens (Human).